Reading from the N-terminus, the 363-residue chain is Lipoyl synthase (363 aa).

[4Fe-4S] cluster is bound by residues cysteine 55, cysteine 60, cysteine 66, cysteine 81, cysteine 85, cysteine 88, and serine 292. A Radical SAM core domain is found at 67–281 (WESREATFLI…SKLAKELGFG (215 aa)). Residues 338–363 (PSEETPVTTRMAKTPAQSNSVAATIR) are disordered. The span at 352 to 363 (PAQSNSVAATIR) shows a compositional bias: polar residues.

This sequence belongs to the radical SAM superfamily. Lipoyl synthase family. Requires [4Fe-4S] cluster as cofactor.

It localises to the cytoplasm. The catalysed reaction is [[Fe-S] cluster scaffold protein carrying a second [4Fe-4S](2+) cluster] + N(6)-octanoyl-L-lysyl-[protein] + 2 oxidized [2Fe-2S]-[ferredoxin] + 2 S-adenosyl-L-methionine + 4 H(+) = [[Fe-S] cluster scaffold protein] + N(6)-[(R)-dihydrolipoyl]-L-lysyl-[protein] + 4 Fe(3+) + 2 hydrogen sulfide + 2 5'-deoxyadenosine + 2 L-methionine + 2 reduced [2Fe-2S]-[ferredoxin]. The protein operates within protein modification; protein lipoylation via endogenous pathway; protein N(6)-(lipoyl)lysine from octanoyl-[acyl-carrier-protein]: step 2/2. Functionally, catalyzes the radical-mediated insertion of two sulfur atoms into the C-6 and C-8 positions of the octanoyl moiety bound to the lipoyl domains of lipoate-dependent enzymes, thereby converting the octanoylated domains into lipoylated derivatives. This Corynebacterium aurimucosum (strain ATCC 700975 / DSM 44827 / CIP 107346 / CN-1) (Corynebacterium nigricans) protein is Lipoyl synthase.